A 201-amino-acid polypeptide reads, in one-letter code: Large ribosomal subunit protein bL25 (201 aa).

Positions 181–201 are disordered; it reads APRESEEEAEEEATETAKESE. A compositionally biased stretch (acidic residues) spans 185–194; that stretch reads SEEEAEEEAT.

The protein belongs to the bacterial ribosomal protein bL25 family. CTC subfamily. As to quaternary structure, part of the 50S ribosomal subunit; part of the 5S rRNA/L5/L18/L25 subcomplex. Contacts the 5S rRNA. Binds to the 5S rRNA independently of L5 and L18.

This is one of the proteins that binds to the 5S RNA in the ribosome where it forms part of the central protuberance. In Thermoanaerobacter pseudethanolicus (strain ATCC 33223 / 39E) (Clostridium thermohydrosulfuricum), this protein is Large ribosomal subunit protein bL25.